The sequence spans 315 residues: Lipoyl synthase (315 aa).

7 residues coordinate [4Fe-4S] cluster: Cys62, Cys67, Cys73, Cys88, Cys92, Cys95, and Ser302. The 218-residue stretch at Phe74 to Lys291 folds into the Radical SAM core domain.

This sequence belongs to the radical SAM superfamily. Lipoyl synthase family. [4Fe-4S] cluster serves as cofactor.

Its subcellular location is the cytoplasm. The catalysed reaction is [[Fe-S] cluster scaffold protein carrying a second [4Fe-4S](2+) cluster] + N(6)-octanoyl-L-lysyl-[protein] + 2 oxidized [2Fe-2S]-[ferredoxin] + 2 S-adenosyl-L-methionine + 4 H(+) = [[Fe-S] cluster scaffold protein] + N(6)-[(R)-dihydrolipoyl]-L-lysyl-[protein] + 4 Fe(3+) + 2 hydrogen sulfide + 2 5'-deoxyadenosine + 2 L-methionine + 2 reduced [2Fe-2S]-[ferredoxin]. The protein operates within protein modification; protein lipoylation via endogenous pathway; protein N(6)-(lipoyl)lysine from octanoyl-[acyl-carrier-protein]: step 2/2. Its function is as follows. Catalyzes the radical-mediated insertion of two sulfur atoms into the C-6 and C-8 positions of the octanoyl moiety bound to the lipoyl domains of lipoate-dependent enzymes, thereby converting the octanoylated domains into lipoylated derivatives. The polypeptide is Lipoyl synthase (Aromatoleum aromaticum (strain DSM 19018 / LMG 30748 / EbN1) (Azoarcus sp. (strain EbN1))).